The sequence spans 313 residues: 4-hydroxy-3-methylbut-2-enyl diphosphate reductase (313 aa).

Residue C20 coordinates [4Fe-4S] cluster. (2E)-4-hydroxy-3-methylbut-2-enyl diphosphate-binding residues include H49 and H82. Dimethylallyl diphosphate is bound by residues H49 and H82. 2 residues coordinate isopentenyl diphosphate: H49 and H82. C104 is a [4Fe-4S] cluster binding site. (2E)-4-hydroxy-3-methylbut-2-enyl diphosphate is bound at residue H132. Position 132 (H132) interacts with dimethylallyl diphosphate. H132 contacts isopentenyl diphosphate. E134 functions as the Proton donor in the catalytic mechanism. Position 172 (T172) interacts with (2E)-4-hydroxy-3-methylbut-2-enyl diphosphate. A [4Fe-4S] cluster-binding site is contributed by C201. Residues S229, S230, N231, and S273 each contribute to the (2E)-4-hydroxy-3-methylbut-2-enyl diphosphate site. S229, S230, N231, and S273 together coordinate dimethylallyl diphosphate. Isopentenyl diphosphate contacts are provided by S229, S230, N231, and S273.

The protein belongs to the IspH family. Requires [4Fe-4S] cluster as cofactor.

The catalysed reaction is isopentenyl diphosphate + 2 oxidized [2Fe-2S]-[ferredoxin] + H2O = (2E)-4-hydroxy-3-methylbut-2-enyl diphosphate + 2 reduced [2Fe-2S]-[ferredoxin] + 2 H(+). It catalyses the reaction dimethylallyl diphosphate + 2 oxidized [2Fe-2S]-[ferredoxin] + H2O = (2E)-4-hydroxy-3-methylbut-2-enyl diphosphate + 2 reduced [2Fe-2S]-[ferredoxin] + 2 H(+). The protein operates within isoprenoid biosynthesis; dimethylallyl diphosphate biosynthesis; dimethylallyl diphosphate from (2E)-4-hydroxy-3-methylbutenyl diphosphate: step 1/1. It functions in the pathway isoprenoid biosynthesis; isopentenyl diphosphate biosynthesis via DXP pathway; isopentenyl diphosphate from 1-deoxy-D-xylulose 5-phosphate: step 6/6. Catalyzes the conversion of 1-hydroxy-2-methyl-2-(E)-butenyl 4-diphosphate (HMBPP) into a mixture of isopentenyl diphosphate (IPP) and dimethylallyl diphosphate (DMAPP). Acts in the terminal step of the DOXP/MEP pathway for isoprenoid precursor biosynthesis. The protein is 4-hydroxy-3-methylbut-2-enyl diphosphate reductase of Desulfotalea psychrophila (strain LSv54 / DSM 12343).